We begin with the raw amino-acid sequence, 305 residues long: UDP-3-O-acyl-N-acetylglucosamine deacetylase (305 aa).

The Zn(2+) site is built by H79, H238, and D242. H265 serves as the catalytic Proton donor.

The protein belongs to the LpxC family. The cofactor is Zn(2+).

The catalysed reaction is a UDP-3-O-[(3R)-3-hydroxyacyl]-N-acetyl-alpha-D-glucosamine + H2O = a UDP-3-O-[(3R)-3-hydroxyacyl]-alpha-D-glucosamine + acetate. It participates in glycolipid biosynthesis; lipid IV(A) biosynthesis; lipid IV(A) from (3R)-3-hydroxytetradecanoyl-[acyl-carrier-protein] and UDP-N-acetyl-alpha-D-glucosamine: step 2/6. Catalyzes the hydrolysis of UDP-3-O-myristoyl-N-acetylglucosamine to form UDP-3-O-myristoylglucosamine and acetate, the committed step in lipid A biosynthesis. The polypeptide is UDP-3-O-acyl-N-acetylglucosamine deacetylase (Escherichia coli O45:K1 (strain S88 / ExPEC)).